A 396-amino-acid polypeptide reads, in one-letter code: Probable sugar efflux transporter (396 aa).

12 consecutive transmembrane segments (helical) span residues 15–35 (VVTL…PVGL), 50–70 (VGIM…PFML), 81–101 (LICL…SWSF), 103–123 (VLVI…SITA), 136–156 (AQAL…GLPL), 170–190 (FFAI…LLPL), 209–229 (PALM…YTAY), 246–266 (FATA…VIFG), 275–295 (ALVS…LPAA), 299–319 (IHLG…GLGM), 333–353 (VAMA…ALVG), and 364–384 (MIGY…IIIF).

This sequence belongs to the major facilitator superfamily. SotB (TC 2.A.1.2) family.

The protein localises to the cell inner membrane. Its function is as follows. Involved in the efflux of sugars. The physiological role may be the reduction of the intracellular concentration of toxic sugars or sugar metabolites. This Shigella boydii serotype 18 (strain CDC 3083-94 / BS512) protein is Probable sugar efflux transporter.